Reading from the N-terminus, the 285-residue chain is MATKLQDGNTPCLAATPSEPRPTVLVFDSGVGGLSVYDEIRHLLPDLHYIYAFDNVAFPYGEKSEAFIVERVVAIVTAVQERYPLALAVVACNTASTVSLPALREKFDFPVVGVVPAIKPAARLTANGIVGLLATRGTVKRSYTHELIARFANECQIEMLGSAEMVELAEAKLHGEDVSLDALKRILRPWLRMKEPPDTVVLGCTHFPLLQEELLQVLPEGTRLVDSGAAIARRTAWLLEHEAPDAKSADANIAFCMAMTPGAEQLLPVLQRYGFETLEKLAVLG.

Substrate contacts are provided by residues 28–29 and 60–61; these read DS and YG. The active-site Proton donor/acceptor is cysteine 92. 93–94 contributes to the substrate binding site; that stretch reads NT. Residues arginine 104 and 113 to 119 each bind UDP-N-acetyl-alpha-D-muramoyl-L-alanine; that span reads GVVPAIK. Cysteine 204 functions as the Proton donor/acceptor in the catalytic mechanism. Substrate is bound at residue 205-206; that stretch reads TH.

Belongs to the aspartate/glutamate racemases family. In terms of assembly, monomer.

The enzyme catalyses L-glutamate = D-glutamate. It participates in cell wall biogenesis; peptidoglycan biosynthesis. With respect to regulation, the low basal catalytic activity in increased 1000-fold in the presence of UDP-MurNAc-L-Ala, the product of the preceding enzyme in the peptidoglycan biosynthesis. In terms of biological role, provides the (R)-glutamate required for cell wall biosynthesis. This chain is Glutamate racemase, found in Escherichia coli (strain K12).